Consider the following 348-residue polypeptide: Phosphate acyltransferase (348 aa).

It belongs to the PlsX family. In terms of assembly, homodimer. Probably interacts with PlsY.

The protein resides in the cytoplasm. It carries out the reaction a fatty acyl-[ACP] + phosphate = an acyl phosphate + holo-[ACP]. The protein operates within lipid metabolism; phospholipid metabolism. Its function is as follows. Catalyzes the reversible formation of acyl-phosphate (acyl-PO(4)) from acyl-[acyl-carrier-protein] (acyl-ACP). This enzyme utilizes acyl-ACP as fatty acyl donor, but not acyl-CoA. In Neisseria gonorrhoeae (strain ATCC 700825 / FA 1090), this protein is Phosphate acyltransferase.